The primary structure comprises 130 residues: Lipoprotein LpqS (130 aa).

Residues 1–23 (MVWMRSAIVAVALGVTVAAVAAA) form the signal peptide. The N-palmitoyl cysteine moiety is linked to residue Cys-24. Cys-24 is lipidated: S-diacylglycerol cysteine.

The protein resides in the cell membrane. May play an essential role in M.tuberculosis replication and survival inside the host cell. The chain is Lipoprotein LpqS from Mycobacterium tuberculosis (strain ATCC 25618 / H37Rv).